Here is a 192-residue protein sequence, read N- to C-terminus: Interleukin-18 (192 aa).

Residues 1–35 constitute a propeptide that is removed on maturation; sequence MAAIPVDDCINFVGMKFIDNTLYFVADSDENLETD.

The protein belongs to the IL-1 family. Forms a ternary complex with ligand-binding receptor subunit IL18R1 and signaling receptor subunit IL18RAP at the plasma membrane. Mature IL18 first binds to IL18R1 forming a low affinity binary complex, which then interacts with IL18RAP to form a high affinity ternary complex that signals inside the cell. Interacts with cargo receptor TMED10; the interaction mediates the translocation from the cytoplasm into the ERGIC (endoplasmic reticulum-Golgi intermediate compartment) and thereby secretion. The pro-IL-18 precursor is processed by CASP1, CASP4 or CASP5 to yield its mature, active form. The pro-IL-18 precursor features autoinhibitory interactions between the propeptide and the post-cleavage-site region, preventing recognition by the IL18R1 receptor. Processing by CASP1, CASP4 or CASP5 induces conformational changes to generate critical receptor-binding sites. The mature form is then secreted and released in the extracellular milieu by passing through the gasdermin-D (GSDMD) pore. In contrast, cleavage by CASP3 inactivates IL18.

It localises to the cytoplasm. The protein localises to the cytosol. The protein resides in the secreted. Its function is as follows. Pro-inflammatory cytokine primarily involved in epithelial barrier repair, polarized T-helper 1 (Th1) cell and natural killer (NK) cell immune responses. Upon binding to IL18R1 and IL18RAP, forms a signaling ternary complex which activates NF-kappa-B, triggering synthesis of inflammatory mediators. Synergizes with IL12/interleukin-12 to induce IFNG synthesis from T-helper 1 (Th1) cells and natural killer (NK) cells. Involved in transduction of inflammation downstream of pyroptosis: its mature form is specifically released in the extracellular milieu by passing through the gasdermin-D (GSDMD) pore. This Felis catus (Cat) protein is Interleukin-18 (IL18).